The primary structure comprises 346 residues: N-acetyl-gamma-glutamyl-phosphate reductase (346 aa).

Residue C149 is part of the active site.

This sequence belongs to the NAGSA dehydrogenase family. Type 1 subfamily.

Its subcellular location is the cytoplasm. It catalyses the reaction N-acetyl-L-glutamate 5-semialdehyde + phosphate + NADP(+) = N-acetyl-L-glutamyl 5-phosphate + NADPH + H(+). The protein operates within amino-acid biosynthesis; L-arginine biosynthesis; N(2)-acetyl-L-ornithine from L-glutamate: step 3/4. Its function is as follows. Catalyzes the NADPH-dependent reduction of N-acetyl-5-glutamyl phosphate to yield N-acetyl-L-glutamate 5-semialdehyde. The protein is N-acetyl-gamma-glutamyl-phosphate reductase of Desulfotalea psychrophila (strain LSv54 / DSM 12343).